Consider the following 148-residue polypeptide: Large ribosomal subunit protein bL9 (148 aa).

Belongs to the bacterial ribosomal protein bL9 family.

Binds to the 23S rRNA. This is Large ribosomal subunit protein bL9 from Ruminiclostridium cellulolyticum (strain ATCC 35319 / DSM 5812 / JCM 6584 / H10) (Clostridium cellulolyticum).